A 406-amino-acid polypeptide reads, in one-letter code: Imidazolonepropionase (406 aa).

Residues His-72 and His-74 each coordinate Fe(3+). 2 residues coordinate Zn(2+): His-72 and His-74. Positions 81, 144, and 177 each coordinate 4-imidazolone-5-propanoate. Tyr-144 is an N-formimidoyl-L-glutamate binding site. His-242 contributes to the Fe(3+) binding site. His-242 contacts Zn(2+). Residue Gln-245 participates in 4-imidazolone-5-propanoate binding. Residue Asp-317 participates in Fe(3+) binding. Asp-317 serves as a coordination point for Zn(2+). Residues Asn-319 and Gly-321 each contribute to the N-formimidoyl-L-glutamate site. Thr-322 is a 4-imidazolone-5-propanoate binding site.

It belongs to the metallo-dependent hydrolases superfamily. HutI family. Requires Zn(2+) as cofactor. It depends on Fe(3+) as a cofactor.

It localises to the cytoplasm. It carries out the reaction 4-imidazolone-5-propanoate + H2O = N-formimidoyl-L-glutamate. It participates in amino-acid degradation; L-histidine degradation into L-glutamate; N-formimidoyl-L-glutamate from L-histidine: step 3/3. In terms of biological role, catalyzes the hydrolytic cleavage of the carbon-nitrogen bond in imidazolone-5-propanoate to yield N-formimidoyl-L-glutamate. It is the third step in the universal histidine degradation pathway. The chain is Imidazolonepropionase from Yersinia pseudotuberculosis serotype O:3 (strain YPIII).